A 40-amino-acid chain; its full sequence is Photosystem II reaction center protein J (40 aa).

Residues 8–28 (IPLWIIGTVAGILVIGLIGIF) traverse the membrane as a helical segment.

The protein belongs to the PsbJ family. PSII is composed of 1 copy each of membrane proteins PsbA, PsbB, PsbC, PsbD, PsbE, PsbF, PsbH, PsbI, PsbJ, PsbK, PsbL, PsbM, PsbT, PsbX, PsbY, PsbZ, Psb30/Ycf12, at least 3 peripheral proteins of the oxygen-evolving complex and a large number of cofactors. It forms dimeric complexes.

It is found in the plastid. The protein resides in the chloroplast thylakoid membrane. One of the components of the core complex of photosystem II (PSII). PSII is a light-driven water:plastoquinone oxidoreductase that uses light energy to abstract electrons from H(2)O, generating O(2) and a proton gradient subsequently used for ATP formation. It consists of a core antenna complex that captures photons, and an electron transfer chain that converts photonic excitation into a charge separation. This is Photosystem II reaction center protein J from Nicotiana sylvestris (Wood tobacco).